The following is a 133-amino-acid chain: Phosphoribosyl-AMP cyclohydrolase (133 aa).

Aspartate 90 contacts Mg(2+). Cysteine 91 contributes to the Zn(2+) binding site. Positions 92 and 94 each coordinate Mg(2+). Zn(2+) is bound by residues cysteine 107 and cysteine 114.

It belongs to the PRA-CH family. Homodimer. Mg(2+) is required as a cofactor. It depends on Zn(2+) as a cofactor.

Its subcellular location is the cytoplasm. It carries out the reaction 1-(5-phospho-beta-D-ribosyl)-5'-AMP + H2O = 1-(5-phospho-beta-D-ribosyl)-5-[(5-phospho-beta-D-ribosylamino)methylideneamino]imidazole-4-carboxamide. The protein operates within amino-acid biosynthesis; L-histidine biosynthesis; L-histidine from 5-phospho-alpha-D-ribose 1-diphosphate: step 3/9. Functionally, catalyzes the hydrolysis of the adenine ring of phosphoribosyl-AMP. The chain is Phosphoribosyl-AMP cyclohydrolase from Streptomyces avermitilis (strain ATCC 31267 / DSM 46492 / JCM 5070 / NBRC 14893 / NCIMB 12804 / NRRL 8165 / MA-4680).